The chain runs to 315 residues: 4-hydroxy-3-methylbut-2-enyl diphosphate reductase (315 aa).

Cys12 is a [4Fe-4S] cluster binding site. (2E)-4-hydroxy-3-methylbut-2-enyl diphosphate contacts are provided by His41 and His74. Dimethylallyl diphosphate contacts are provided by His41 and His74. Isopentenyl diphosphate contacts are provided by His41 and His74. Cys96 contacts [4Fe-4S] cluster. Residue His124 participates in (2E)-4-hydroxy-3-methylbut-2-enyl diphosphate binding. A dimethylallyl diphosphate-binding site is contributed by His124. Position 124 (His124) interacts with isopentenyl diphosphate. Glu126 functions as the Proton donor in the catalytic mechanism. Position 168 (Thr168) interacts with (2E)-4-hydroxy-3-methylbut-2-enyl diphosphate. Position 198 (Cys198) interacts with [4Fe-4S] cluster. (2E)-4-hydroxy-3-methylbut-2-enyl diphosphate-binding residues include Ser226, Ser227, Asn228, and Ser270. Dimethylallyl diphosphate is bound by residues Ser226, Ser227, Asn228, and Ser270. Isopentenyl diphosphate is bound by residues Ser226, Ser227, Asn228, and Ser270.

Belongs to the IspH family. [4Fe-4S] cluster serves as cofactor.

It catalyses the reaction isopentenyl diphosphate + 2 oxidized [2Fe-2S]-[ferredoxin] + H2O = (2E)-4-hydroxy-3-methylbut-2-enyl diphosphate + 2 reduced [2Fe-2S]-[ferredoxin] + 2 H(+). The enzyme catalyses dimethylallyl diphosphate + 2 oxidized [2Fe-2S]-[ferredoxin] + H2O = (2E)-4-hydroxy-3-methylbut-2-enyl diphosphate + 2 reduced [2Fe-2S]-[ferredoxin] + 2 H(+). It functions in the pathway isoprenoid biosynthesis; dimethylallyl diphosphate biosynthesis; dimethylallyl diphosphate from (2E)-4-hydroxy-3-methylbutenyl diphosphate: step 1/1. Its pathway is isoprenoid biosynthesis; isopentenyl diphosphate biosynthesis via DXP pathway; isopentenyl diphosphate from 1-deoxy-D-xylulose 5-phosphate: step 6/6. In terms of biological role, catalyzes the conversion of 1-hydroxy-2-methyl-2-(E)-butenyl 4-diphosphate (HMBPP) into a mixture of isopentenyl diphosphate (IPP) and dimethylallyl diphosphate (DMAPP). Acts in the terminal step of the DOXP/MEP pathway for isoprenoid precursor biosynthesis. This is 4-hydroxy-3-methylbut-2-enyl diphosphate reductase from Pseudomonas savastanoi pv. phaseolicola (strain 1448A / Race 6) (Pseudomonas syringae pv. phaseolicola (strain 1448A / Race 6)).